The primary structure comprises 147 residues: D-aminoacyl-tRNA deacylase (147 aa).

A Gly-cisPro motif, important for rejection of L-amino acids motif is present at residues 136–137 (GP).

It belongs to the DTD family. As to quaternary structure, homodimer.

It localises to the cytoplasm. The enzyme catalyses glycyl-tRNA(Ala) + H2O = tRNA(Ala) + glycine + H(+). It carries out the reaction a D-aminoacyl-tRNA + H2O = a tRNA + a D-alpha-amino acid + H(+). Functionally, an aminoacyl-tRNA editing enzyme that deacylates mischarged D-aminoacyl-tRNAs. Also deacylates mischarged glycyl-tRNA(Ala), protecting cells against glycine mischarging by AlaRS. Acts via tRNA-based rather than protein-based catalysis; rejects L-amino acids rather than detecting D-amino acids in the active site. By recycling D-aminoacyl-tRNA to D-amino acids and free tRNA molecules, this enzyme counteracts the toxicity associated with the formation of D-aminoacyl-tRNA entities in vivo and helps enforce protein L-homochirality. The protein is D-aminoacyl-tRNA deacylase of Streptococcus pyogenes serotype M6 (strain ATCC BAA-946 / MGAS10394).